Reading from the N-terminus, the 315-residue chain is Putative HTH-type transcriptional regulatory protein PH1808 (315 aa).

One can recognise an HTH cro/C1-type domain in the interval 131 to 189; sequence LKALREEHGYSITELAGILGISRKSLQRYEKGESVVSLEVALRLEEVFDEPLVKPIDVL. Residues 142–161 constitute a DNA-binding region (H-T-H motif); it reads ITELAGILGISRKSLQRYEK.

The sequence is that of Putative HTH-type transcriptional regulatory protein PH1808 from Pyrococcus horikoshii (strain ATCC 700860 / DSM 12428 / JCM 9974 / NBRC 100139 / OT-3).